The chain runs to 381 residues: p55-v-Fos-transforming protein (381 aa).

The bZIP domain maps to 137 to 200; that stretch reads EEKRRIRRER…EKLEFILAAH (64 aa). The interval 139 to 159 is basic motif; the sequence is KRRIRRERNKMAAAKCRNRRR. The tract at residues 165-193 is leucine-zipper; sequence LQAETDQLEDKKSALQTEIANLLKEKEKL.

This sequence belongs to the bZIP family. Fos subfamily.

Its subcellular location is the host nucleus. The polypeptide is p55-v-Fos-transforming protein (V-FOS) (Mus musculus (Mouse)).